Reading from the N-terminus, the 364-residue chain is UDP-3-O-acylglucosamine N-acyltransferase (364 aa).

The active-site Proton acceptor is H258.

The protein belongs to the transferase hexapeptide repeat family. LpxD subfamily. In terms of assembly, homotrimer.

It catalyses the reaction a UDP-3-O-[(3R)-3-hydroxyacyl]-alpha-D-glucosamine + a (3R)-hydroxyacyl-[ACP] = a UDP-2-N,3-O-bis[(3R)-3-hydroxyacyl]-alpha-D-glucosamine + holo-[ACP] + H(+). The protein operates within bacterial outer membrane biogenesis; LPS lipid A biosynthesis. Catalyzes the N-acylation of UDP-3-O-acylglucosamine using 3-hydroxyacyl-ACP as the acyl donor. Is involved in the biosynthesis of lipid A, a phosphorylated glycolipid that anchors the lipopolysaccharide to the outer membrane of the cell. The polypeptide is UDP-3-O-acylglucosamine N-acyltransferase (Burkholderia orbicola (strain AU 1054)).